The following is a 276-amino-acid chain: Diaminopimelate epimerase (276 aa).

Substrate-binding residues include Asn13, Gln46, and Asn66. Cys75 functions as the Proton donor in the catalytic mechanism. Residues 76–77 (GN), Asn159, Asn192, and 210–211 (ER) contribute to the substrate site. Residue Cys219 is the Proton acceptor of the active site. A substrate-binding site is contributed by 220–221 (GS).

Belongs to the diaminopimelate epimerase family. In terms of assembly, homodimer.

The protein localises to the cytoplasm. The enzyme catalyses (2S,6S)-2,6-diaminopimelate = meso-2,6-diaminopimelate. Its pathway is amino-acid biosynthesis; L-lysine biosynthesis via DAP pathway; DL-2,6-diaminopimelate from LL-2,6-diaminopimelate: step 1/1. Its function is as follows. Catalyzes the stereoinversion of LL-2,6-diaminopimelate (L,L-DAP) to meso-diaminopimelate (meso-DAP), a precursor of L-lysine and an essential component of the bacterial peptidoglycan. The chain is Diaminopimelate epimerase from Coxiella burnetii (strain CbuK_Q154) (Coxiella burnetii (strain Q154)).